Here is a 333-residue protein sequence, read N- to C-terminus: UDP-N-acetylglucosamine--N-acetylmuramyl-(pentapeptide) pyrophosphoryl-undecaprenol N-acetylglucosamine transferase (333 aa).

Residues 10 to 12, N124, S177, and Q275 each bind UDP-N-acetyl-alpha-D-glucosamine; that span reads TGG.

Belongs to the glycosyltransferase 28 family. MurG subfamily.

It is found in the cell inner membrane. The catalysed reaction is di-trans,octa-cis-undecaprenyl diphospho-N-acetyl-alpha-D-muramoyl-L-alanyl-D-glutamyl-meso-2,6-diaminopimeloyl-D-alanyl-D-alanine + UDP-N-acetyl-alpha-D-glucosamine = di-trans,octa-cis-undecaprenyl diphospho-[N-acetyl-alpha-D-glucosaminyl-(1-&gt;4)]-N-acetyl-alpha-D-muramoyl-L-alanyl-D-glutamyl-meso-2,6-diaminopimeloyl-D-alanyl-D-alanine + UDP + H(+). The protein operates within cell wall biogenesis; peptidoglycan biosynthesis. Cell wall formation. Catalyzes the transfer of a GlcNAc subunit on undecaprenyl-pyrophosphoryl-MurNAc-pentapeptide (lipid intermediate I) to form undecaprenyl-pyrophosphoryl-MurNAc-(pentapeptide)GlcNAc (lipid intermediate II). The sequence is that of UDP-N-acetylglucosamine--N-acetylmuramyl-(pentapeptide) pyrophosphoryl-undecaprenol N-acetylglucosamine transferase from Nitratiruptor sp. (strain SB155-2).